The sequence spans 240 residues: Ribosomal RNA large subunit methyltransferase E (240 aa).

Positions 1 to 20 are enriched in gly residues; it reads MSKAGGNKGGSRTGGRGGAG. The segment at 1-33 is disordered; the sequence is MSKAGGNKGGSRTGGRGGAGSSNLHVRVKKKAG. Gly92, Trp94, Asp115, Asp131, and Asp155 together coordinate S-adenosyl-L-methionine. The Proton acceptor role is filled by Lys195.

Belongs to the class I-like SAM-binding methyltransferase superfamily. RNA methyltransferase RlmE family.

It localises to the cytoplasm. It catalyses the reaction uridine(2552) in 23S rRNA + S-adenosyl-L-methionine = 2'-O-methyluridine(2552) in 23S rRNA + S-adenosyl-L-homocysteine + H(+). In terms of biological role, specifically methylates the uridine in position 2552 of 23S rRNA at the 2'-O position of the ribose in the fully assembled 50S ribosomal subunit. This is Ribosomal RNA large subunit methyltransferase E from Brucella abortus (strain S19).